A 160-amino-acid polypeptide reads, in one-letter code: NADH-quinone oxidoreductase subunit I (160 aa).

2 4Fe-4S ferredoxin-type domains span residues 52–81 (RRYS…IEAE) and 91–120 (TRYD…EGPN). Positions 61, 64, 67, 71, 100, 103, 106, and 110 each coordinate [4Fe-4S] cluster.

Belongs to the complex I 23 kDa subunit family. As to quaternary structure, NDH-1 is composed of 14 different subunits. Subunits NuoA, H, J, K, L, M, N constitute the membrane sector of the complex. [4Fe-4S] cluster is required as a cofactor.

The protein resides in the cell membrane. The catalysed reaction is a quinone + NADH + 5 H(+)(in) = a quinol + NAD(+) + 4 H(+)(out). In terms of biological role, NDH-1 shuttles electrons from NADH, via FMN and iron-sulfur (Fe-S) centers, to quinones in the respiratory chain. The immediate electron acceptor for the enzyme in this species is believed to be ubiquinone. Couples the redox reaction to proton translocation (for every two electrons transferred, four hydrogen ions are translocated across the cytoplasmic membrane), and thus conserves the redox energy in a proton gradient. The polypeptide is NADH-quinone oxidoreductase subunit I (Wolbachia sp. subsp. Brugia malayi (strain TRS)).